The following is a 525-amino-acid chain: Putative EGF-like domain-containing protein R659 (525 aa).

The first 24 residues, 1 to 24, serve as a signal peptide directing secretion; that stretch reads MGNKWCGIFLTILLLAQMSQTIFG. Asparagine 60, asparagine 77, asparagine 171, asparagine 181, asparagine 268, and asparagine 281 each carry an N-linked (GlcNAc...) asparagine; by host glycan. An EGF-like domain is found at 317-359; that stretch reads LTQGCGNCDSNAECVFVSGSNSIVPKYQCKCKSGYVGNGTHCS. 3 cysteine pairs are disulfide-bonded: cysteine 321–cysteine 330, cysteine 324–cysteine 345, and cysteine 347–cysteine 358. Asparagine 354 and asparagine 411 each carry an N-linked (GlcNAc...) asparagine; by host glycan.

Its subcellular location is the secreted. This is Putative EGF-like domain-containing protein R659 from Acanthamoeba polyphaga (Amoeba).